The chain runs to 237 residues: Probable transcriptional regulatory protein PSHAa1370 (237 aa).

This sequence belongs to the TACO1 family.

Its subcellular location is the cytoplasm. The chain is Probable transcriptional regulatory protein PSHAa1370 from Pseudoalteromonas translucida (strain TAC 125).